A 999-amino-acid chain; its full sequence is Ulvan lyase, long isoform (999 aa).

An N-terminal signal peptide occupies residues 1–21; that stretch reads MKCLKTLLVSTTLLTAFSLNA. 126 to 127 serves as a coordination point for substrate; that stretch reads SH. The active-site Proton donor/acceptor is His127. Ca(2+) is bound by residues Asp189, Asp199, and Lys201. Residues Tyr280 and Arg297 each contribute to the substrate site. Ca(2+)-binding residues include Asp300, Asp303, and Tyr305. Residue Tyr361 participates in substrate binding.

Belongs to the polysaccharide lyase 24 family.

Functionally, ulvan lyase involved in ulvan degradation. Ulvan is the main polysaccharide component of the Ulvales (green seaweed) cell wall. It is composed of disaccharide building blocks comprising 3-sulfated rhamnose (Rha3S) linked to D-glucuronic acid (GlcA), L-iduronic acid (IduA), or D-xylose (Xyl). Ulvan lyase catalyzes preferentially the endolytic cleavage of the glycosidic bond between Rha3S and the uronic acid GlcA, but not IduA, producing oligosaccharides that have unsaturated 4-deoxy-L-threo-hex-4-enopyranosiduronic acid (deltaUA) at the non-reducing end. The most abundant end products in the degradation of the ulvan polysaccharide were deltaUA-Rha3S disaccharides and deltaUA-Rha3S-IduA-Rha3S and deltaUA-Rha3S-Xyl-Rha3S tetrasaccharides. This Alteromonas sp. (strain LOR) protein is Ulvan lyase, long isoform.